A 282-amino-acid polypeptide reads, in one-letter code: MSDREQSSGNTAFENPKALDSSEGEFISENNDQSRHSQESICKIYTAGKNNEYIYIGRQKFLRDDLFEAFGGTLNPGLAPAPVHKFANPAPLGLSGFALTTFVLSMFNARAQGITIPNVVVGCAMFYGGLVQLIAGIWEIALENTFGGTALCSFGGFWLSFGAIYIPWFGILDAYKDKESDLGNALGFYLLGWALFTFGLSVCTMKSTIMFFALFFLLAVTFLLLSIANFTGEVGVTRAGGVLGVIVAFIAWYNAYAGIATRQNSYIMVHPFALPSNDKVFF.

Positions 1 to 34 (MSDREQSSGNTAFENPKALDSSEGEFISENNDQS) are disordered. The residue at position 2 (Ser-2) is an N-acetylserine. Phosphoserine occurs at positions 2, 7, 21, 22, 28, and 40. Topologically, residues 2–86 (SDREQSSGNT…GLAPAPVHKF (85 aa)) are extracellular. A helical membrane pass occupies residues 87 to 107 (ANPAPLGLSGFALTTFVLSMF). At 108 to 119 (NARAQGITIPNV) the chain is on the cytoplasmic side. A helical membrane pass occupies residues 120–140 (VVGCAMFYGGLVQLIAGIWEI). Over 141–150 (ALENTFGGTA) the chain is Extracellular. Residues 151–171 (LCSFGGFWLSFGAIYIPWFGI) form a helical membrane-spanning segment. Over 172–184 (LDAYKDKESDLGN) the chain is Cytoplasmic. The chain crosses the membrane as a helical span at residues 185–205 (ALGFYLLGWALFTFGLSVCTM). At 206-207 (KS) the chain is on the extracellular side. A helical membrane pass occupies residues 208-228 (TIMFFALFFLLAVTFLLLSIA). Over 229 to 238 (NFTGEVGVTR) the chain is Cytoplasmic. Residues 239-259 (AGGVLGVIVAFIAWYNAYAGI) form a helical membrane-spanning segment. Residues 260-282 (ATRQNSYIMVHPFALPSNDKVFF) lie on the Extracellular side of the membrane.

This sequence belongs to the acetate uptake transporter (AceTr) (TC 2.A.96) family.

It is found in the cell membrane. Transporter protein required for ammonia export. Involved in acetate resistance. This is Ammonia transport outward protein 2 (ATO2) from Saccharomyces cerevisiae (strain ATCC 204508 / S288c) (Baker's yeast).